A 476-amino-acid chain; its full sequence is uncharacterized protein (476 aa).

Residues 147 to 204 (DVRLAELRRRRAELEAEIAAVEAGDIAVLDPTAVRDRYQQLSTTARELLSDFREVEEN) are a coiled coil.

This is an uncharacterized protein from Mycolicibacterium smegmatis (strain ATCC 700084 / mc(2)155) (Mycobacterium smegmatis).